The chain runs to 354 residues: MTVLKNDRYLKALLREPVDMTPVWMMRQAGRYLPEYKATRAKAGDFMSLCRNADLACEVTLQPLRRYDLDAAILFSDILTIPDAMGLGLSFGVGEGPKFARPIDNKSAVQNLPIPDPEQELQYVMNAVRTIRRELKGEVPLIGFSGSPWTLATYMVEGGSSKAFTKIKKMMYSEPKILHLLLDKLADAVILYLNAQINAGVQAVMVFDTWGGVLGHREYLDFSLQYMHKIVDGLIRENDGYKVPVTLFTKGGGLWLEAMASTGCDALGLDWTVNLAEAKARVGHKVALQGNMDPSVLYASPARIEQEVQQILADFGQGSGHVFNLGHGIHQDVPEISPKVFVDAVHQYSIFYHQ.

Residues 27–31, aspartate 77, tyrosine 154, threonine 209, and histidine 327 each bind substrate; that span reads RQAGR.

Belongs to the uroporphyrinogen decarboxylase family. Homodimer.

The protein localises to the cytoplasm. The enzyme catalyses uroporphyrinogen III + 4 H(+) = coproporphyrinogen III + 4 CO2. It participates in porphyrin-containing compound metabolism; protoporphyrin-IX biosynthesis; coproporphyrinogen-III from 5-aminolevulinate: step 4/4. Its function is as follows. Catalyzes the decarboxylation of four acetate groups of uroporphyrinogen-III to yield coproporphyrinogen-III. The sequence is that of Uroporphyrinogen decarboxylase from Histophilus somni (strain 2336) (Haemophilus somnus).